The primary structure comprises 131 residues: Small ribosomal subunit protein uS8 (131 aa).

Belongs to the universal ribosomal protein uS8 family. In terms of assembly, part of the 30S ribosomal subunit. Contacts proteins S5 and S12.

Functionally, one of the primary rRNA binding proteins, it binds directly to 16S rRNA central domain where it helps coordinate assembly of the platform of the 30S subunit. The protein is Small ribosomal subunit protein uS8 of Acinetobacter baumannii (strain AB307-0294).